The chain runs to 372 residues: Putative KilA-N domain-containing protein L32 (372 aa).

Over residues 1-12 (MPHKAPKSKLFR) the composition is skewed to basic residues. The tract at residues 1-129 (MPHKAPKSKL…SDNDKSKDNF (129 aa)) is disordered. Residues 14 to 36 (RYVEDSDDETRGRSRNRSVEKSR) are compositionally biased toward basic and acidic residues. Positions 37 to 53 (SKSLTRSKSKSPKKSRS) are enriched in basic residues. Residues 79–120 (EDSEDSEDSESDQDDDKSDNEQSDSELDDSESDDDETDDNES) show a composition bias toward acidic residues. Positions 151-255 (KFAIGKFGDF…IKIGEWIEEW (105 aa)) constitute a KilA-N domain.

The protein is Putative KilA-N domain-containing protein L32 of Acanthamoeba polyphaga (Amoeba).